Here is a 740-residue protein sequence, read N- to C-terminus: Ion-translocating oxidoreductase complex subunit C (740 aa).

2 consecutive 4Fe-4S ferredoxin-type domains span residues 369 to 397 and 407 to 436; these read GEPQEEQSCIRCSACADACPADLLPQQLY and KATTHNIADCIECGACAWVCPSNIPLVQYF. 8 residues coordinate [4Fe-4S] cluster: Cys377, Cys380, Cys383, Cys387, Cys416, Cys419, Cys422, and Cys426. Disordered stretches follow at residues 602-652, 664-685, and 695-714; these read KLEQ…DPRK, ARKLEQQQANAEPEEQVDPRKA, and KARKLEQQQANAEPEEQVDP. Over residues 605–615 the composition is skewed to low complexity; sequence QQQANAEPEQQ.

It belongs to the 4Fe4S bacterial-type ferredoxin family. RnfC subfamily. The complex is composed of six subunits: RsxA, RsxB, RsxC, RsxD, RsxE and RsxG. [4Fe-4S] cluster serves as cofactor.

The protein localises to the cell inner membrane. In terms of biological role, part of a membrane-bound complex that couples electron transfer with translocation of ions across the membrane. Required to maintain the reduced state of SoxR. This chain is Ion-translocating oxidoreductase complex subunit C, found in Escherichia coli O157:H7.